The following is an 89-amino-acid chain: Defensin-like protein 108 (89 aa).

The signal sequence occupies residues 1-20; sequence MTSLIAFLFTVLVIVSSVHC. 4 disulfides stabilise this stretch: Cys-39–Cys-81, Cys-49–Cys-71, Cys-57–Cys-79, and Cys-61–Cys-80.

The protein belongs to the DEFL family.

Its subcellular location is the secreted. This Arabidopsis thaliana (Mouse-ear cress) protein is Defensin-like protein 108 (LCR51).